The sequence spans 209 residues: Ribosomal RNA large subunit methyltransferase E (209 aa).

Residues G63, W65, D83, D99, and D124 each contribute to the S-adenosyl-L-methionine site. The Proton acceptor role is filled by K164.

The protein belongs to the class I-like SAM-binding methyltransferase superfamily. RNA methyltransferase RlmE family.

Its subcellular location is the cytoplasm. The enzyme catalyses uridine(2552) in 23S rRNA + S-adenosyl-L-methionine = 2'-O-methyluridine(2552) in 23S rRNA + S-adenosyl-L-homocysteine + H(+). Specifically methylates the uridine in position 2552 of 23S rRNA at the 2'-O position of the ribose in the fully assembled 50S ribosomal subunit. The chain is Ribosomal RNA large subunit methyltransferase E from Vibrio cholerae serotype O1 (strain ATCC 39541 / Classical Ogawa 395 / O395).